A 177-amino-acid chain; its full sequence is Large ribosomal subunit protein uL6 (177 aa).

It belongs to the universal ribosomal protein uL6 family. As to quaternary structure, part of the 50S ribosomal subunit.

This protein binds to the 23S rRNA, and is important in its secondary structure. It is located near the subunit interface in the base of the L7/L12 stalk, and near the tRNA binding site of the peptidyltransferase center. This is Large ribosomal subunit protein uL6 from Halorhodospira halophila (strain DSM 244 / SL1) (Ectothiorhodospira halophila (strain DSM 244 / SL1)).